The following is a 160-amino-acid chain: Cytochrome b6-f complex subunit 4 (160 aa).

3 helical membrane passes run 36-56, 95-115, and 131-151; these read LLYIFPVVILGTIACNVGLAV, LLGVLLMVSVPAGLLTVPFLE, and TVFLIGTAVALWLGIGATLPI.

The protein belongs to the cytochrome b family. PetD subfamily. In terms of assembly, the 4 large subunits of the cytochrome b6-f complex are cytochrome b6, subunit IV (17 kDa polypeptide, petD), cytochrome f and the Rieske protein, while the 4 small subunits are petG, petL, petM and petN. The complex functions as a dimer.

The protein resides in the plastid. It localises to the chloroplast thylakoid membrane. Functionally, component of the cytochrome b6-f complex, which mediates electron transfer between photosystem II (PSII) and photosystem I (PSI), cyclic electron flow around PSI, and state transitions. This is Cytochrome b6-f complex subunit 4 from Coffea arabica (Arabian coffee).